The chain runs to 524 residues: Lysine--tRNA ligase (524 aa).

The short motif at Ala-39–Ser-47 is the 'HIGH' region element. The 'KMSKS' region motif lies at Lys-294–Ser-298. Lys-297 is a binding site for ATP.

This sequence belongs to the class-I aminoacyl-tRNA synthetase family.

Its subcellular location is the cytoplasm. It carries out the reaction tRNA(Lys) + L-lysine + ATP = L-lysyl-tRNA(Lys) + AMP + diphosphate. The protein is Lysine--tRNA ligase (lysS) of Cenarchaeum symbiosum.